A 531-amino-acid polypeptide reads, in one-letter code: O-phosphoserine--tRNA(Cys) ligase (531 aa).

Substrate-binding positions include 189–191, 234–236, 276–277, and N319; these read HMT, SAS, and YY.

The protein belongs to the class-II aminoacyl-tRNA synthetase family. O-phosphoseryl-tRNA(Cys) synthetase subfamily. As to quaternary structure, homotetramer. Interacts with SepCysS.

The catalysed reaction is tRNA(Cys) + O-phospho-L-serine + ATP = O-phospho-L-seryl-tRNA(Cys) + AMP + diphosphate. Functionally, catalyzes the attachment of O-phosphoserine (Sep) to tRNA(Cys). This chain is O-phosphoserine--tRNA(Cys) ligase, found in Methanoculleus marisnigri (strain ATCC 35101 / DSM 1498 / JR1).